The sequence spans 448 residues: Tubulin beta chain (448 aa).

GTP-binding residues include Gln-11, Glu-69, Ser-138, Gly-142, Thr-143, Gly-144, Asn-204, and Asn-226. Mg(2+) is bound at residue Glu-69. Residues 425 to 448 (YQDAGVDEEEEEYDEEAPVEEPLE) are disordered. Over residues 429–448 (GVDEEEEEYDEEAPVEEPLE) the composition is skewed to acidic residues.

It belongs to the tubulin family. In terms of assembly, dimer of alpha and beta chains. A typical microtubule is a hollow water-filled tube with an outer diameter of 25 nm and an inner diameter of 15 nM. Alpha-beta heterodimers associate head-to-tail to form protofilaments running lengthwise along the microtubule wall with the beta-tubulin subunit facing the microtubule plus end conferring a structural polarity. Microtubules usually have 13 protofilaments but different protofilament numbers can be found in some organisms and specialized cells. The cofactor is Mg(2+).

It localises to the cytoplasm. Its subcellular location is the cytoskeleton. Functionally, tubulin is the major constituent of microtubules, a cylinder consisting of laterally associated linear protofilaments composed of alpha- and beta-tubulin heterodimers. Microtubules grow by the addition of GTP-tubulin dimers to the microtubule end, where a stabilizing cap forms. Below the cap, tubulin dimers are in GDP-bound state, owing to GTPase activity of alpha-tubulin. This chain is Tubulin beta chain, found in Metarhizium anisopliae (Entomophthora anisopliae).